Consider the following 504-residue polypeptide: Maturase K (504 aa).

The protein belongs to the intron maturase 2 family. MatK subfamily.

It is found in the plastid. The protein resides in the chloroplast. In terms of biological role, usually encoded in the trnK tRNA gene intron. Probably assists in splicing its own and other chloroplast group II introns. The sequence is that of Maturase K from Calyptranthes pallens (Spicewood).